A 368-amino-acid chain; its full sequence is tRNA/tmRNA (uracil-C(5))-methyltransferase (368 aa).

Positions 190, 218, 223, 239, and 301 each coordinate S-adenosyl-L-methionine. Cys326 functions as the Nucleophile in the catalytic mechanism. The active-site Proton acceptor is Glu360.

This sequence belongs to the class I-like SAM-binding methyltransferase superfamily. RNA M5U methyltransferase family. TrmA subfamily.

The enzyme catalyses uridine(54) in tRNA + S-adenosyl-L-methionine = 5-methyluridine(54) in tRNA + S-adenosyl-L-homocysteine + H(+). It catalyses the reaction uridine(341) in tmRNA + S-adenosyl-L-methionine = 5-methyluridine(341) in tmRNA + S-adenosyl-L-homocysteine + H(+). Functionally, dual-specificity methyltransferase that catalyzes the formation of 5-methyluridine at position 54 (m5U54) in all tRNAs, and that of position 341 (m5U341) in tmRNA (transfer-mRNA). The sequence is that of tRNA/tmRNA (uracil-C(5))-methyltransferase from Photobacterium profundum (strain SS9).